Reading from the N-terminus, the 591-residue chain is Aspartate--tRNA ligase (591 aa).

Position 176 (Glu-176) interacts with L-aspartate. Residues Gln-200–Lys-203 are aspartate. Arg-222 is an L-aspartate binding site. ATP contacts are provided by residues Arg-222–Glu-224 and Gln-231. L-aspartate is bound at residue His-450. Glu-484 provides a ligand contact to ATP. Arg-491 contacts L-aspartate. Gly-536 to Arg-539 provides a ligand contact to ATP.

This sequence belongs to the class-II aminoacyl-tRNA synthetase family. Type 1 subfamily. In terms of assembly, homodimer.

The protein localises to the cytoplasm. The catalysed reaction is tRNA(Asp) + L-aspartate + ATP = L-aspartyl-tRNA(Asp) + AMP + diphosphate. Its function is as follows. Catalyzes the attachment of L-aspartate to tRNA(Asp) in a two-step reaction: L-aspartate is first activated by ATP to form Asp-AMP and then transferred to the acceptor end of tRNA(Asp). This chain is Aspartate--tRNA ligase, found in Listeria monocytogenes serotype 4b (strain F2365).